A 461-amino-acid chain; its full sequence is UDP-glucose 6-dehydrogenase TuaD (461 aa).

Residues 3–20 (KIAV…GTCF), valine 12, aspartate 31, lysine 36, threonine 122, and glutamate 156 contribute to the NAD(+) site. Residues 152 to 156 (EFLRE), lysine 205, asparagine 209, 250 to 254 (FLKAG), and glycine 258 each bind substrate. Catalysis depends on cysteine 261, which acts as the Nucleophile. Lysine 264 lines the NAD(+) pocket. A substrate-binding site is contributed by lysine 321. Arginine 328 contributes to the NAD(+) binding site.

Belongs to the UDP-glucose/GDP-mannose dehydrogenase family. Phosphorylated by YwqD and dephosphorylated by YwqE in vitro.

The protein resides in the cytoplasm. It catalyses the reaction UDP-alpha-D-glucose + 2 NAD(+) + H2O = UDP-alpha-D-glucuronate + 2 NADH + 3 H(+). It participates in nucleotide-sugar biosynthesis; UDP-alpha-D-glucuronate biosynthesis; UDP-alpha-D-glucuronate from UDP-alpha-D-glucose: step 1/1. Its activity is regulated as follows. Activated by phosphorylation; inhibited by dephosphorylation. Functionally, catalyzes the conversion of UDP-glucose into UDP-glucuronate, one of the precursors of teichuronic acid. In Bacillus subtilis (strain 168), this protein is UDP-glucose 6-dehydrogenase TuaD (tuaD).